The following is a 528-amino-acid chain: Bifunctional pantoate ligase/cytidylate kinase (528 aa).

Positions 1-293 (MRLFTTIAGL…IGSCRLIDNI (293 aa)) are pantoate--beta-alanine ligase. Residue 34–41 (MGALHKGH) participates in ATP binding. His41 functions as the Proton donor in the catalytic mechanism. Residue Gln65 coordinates (R)-pantoate. Gln65 contributes to the beta-alanine binding site. 160–163 (GQKD) is a binding site for ATP. Residue Gln166 participates in (R)-pantoate binding. ATP-binding positions include Ile189 and 197 to 200 (ISSR). Positions 294-528 (LLRNRKPIIA…YGKSSVNNII (235 aa)) are cytidylate kinase.

It in the N-terminal section; belongs to the pantothenate synthetase family. This sequence in the C-terminal section; belongs to the cytidylate kinase family. Type 1 subfamily.

The protein resides in the cytoplasm. It carries out the reaction (R)-pantoate + beta-alanine + ATP = (R)-pantothenate + AMP + diphosphate + H(+). It catalyses the reaction CMP + ATP = CDP + ADP. The catalysed reaction is dCMP + ATP = dCDP + ADP. Its pathway is cofactor biosynthesis; (R)-pantothenate biosynthesis; (R)-pantothenate from (R)-pantoate and beta-alanine: step 1/1. Catalyzes the condensation of pantoate with beta-alanine in an ATP-dependent reaction via a pantoyl-adenylate intermediate. Functionally, catalyzes the transfer of a phosphate group from ATP to either CMP or dCMP to form CDP or dCDP and ADP, respectively. This Trichodesmium erythraeum (strain IMS101) protein is Bifunctional pantoate ligase/cytidylate kinase.